Consider the following 20-residue polypeptide: Fibrinogen beta chain (20 aa).

Positions Ile1–Arg12 are enriched in acidic residues. The interval Ile1–Arg20 is disordered.

As to quaternary structure, heterohexamer; disulfide linked. Contains 2 sets of 3 non-identical chains (alpha, beta and gamma). The 2 heterotrimers are in head to head conformation with the N-termini in a small central domain. In terms of processing, conversion of fibrinogen to fibrin is triggered by thrombin, which cleaves fibrinopeptides A and B from alpha and beta chains, and thus exposes the N-terminal polymerization sites responsible for the formation of the soft clot.

The protein resides in the secreted. Its function is as follows. Cleaved by the protease thrombin to yield monomers which, together with fibrinogen alpha (FGA) and fibrinogen gamma (FGG), polymerize to form an insoluble fibrin matrix. Fibrin has a major function in hemostasis as one of the primary components of blood clots. In addition, functions during the early stages of wound repair to stabilize the lesion and guide cell migration during re-epithelialization. Was originally thought to be essential for platelet aggregation, based on in vitro studies using anticoagulated blood. However subsequent studies have shown that it is not absolutely required for thrombus formation in vivo. Enhances expression of SELP in activated platelets. Maternal fibrinogen is essential for successful pregnancy. Fibrin deposition is also associated with infection, where it protects against IFNG-mediated hemorrhage. May also facilitate the antibacterial immune response via both innate and T-cell mediated pathways. In Felis catus (Cat), this protein is Fibrinogen beta chain (FGB).